Consider the following 368-residue polypeptide: Probable dual-specificity RNA methyltransferase RlmN (368 aa).

Glutamate 109 functions as the Proton acceptor in the catalytic mechanism. The region spanning 115–355 (YPDRVTMCIS…VTIRDTRGQE (241 aa)) is the Radical SAM core domain. Cysteine 122 and cysteine 360 are disulfide-bonded. The [4Fe-4S] cluster site is built by cysteine 129, cysteine 133, and cysteine 136. S-adenosyl-L-methionine contacts are provided by residues 184–185 (GE), serine 218, 241–243 (SLH), and asparagine 317. Cysteine 360 serves as the catalytic S-methylcysteine intermediate.

It belongs to the radical SAM superfamily. RlmN family. Requires [4Fe-4S] cluster as cofactor.

It is found in the cytoplasm. It catalyses the reaction adenosine(2503) in 23S rRNA + 2 reduced [2Fe-2S]-[ferredoxin] + 2 S-adenosyl-L-methionine = 2-methyladenosine(2503) in 23S rRNA + 5'-deoxyadenosine + L-methionine + 2 oxidized [2Fe-2S]-[ferredoxin] + S-adenosyl-L-homocysteine. The catalysed reaction is adenosine(37) in tRNA + 2 reduced [2Fe-2S]-[ferredoxin] + 2 S-adenosyl-L-methionine = 2-methyladenosine(37) in tRNA + 5'-deoxyadenosine + L-methionine + 2 oxidized [2Fe-2S]-[ferredoxin] + S-adenosyl-L-homocysteine. In terms of biological role, specifically methylates position 2 of adenine 2503 in 23S rRNA and position 2 of adenine 37 in tRNAs. This is Probable dual-specificity RNA methyltransferase RlmN from Streptomyces coelicolor (strain ATCC BAA-471 / A3(2) / M145).